The sequence spans 318 residues: Methionyl-tRNA formyltransferase (318 aa).

Residue 117 to 120 participates in (6S)-5,6,7,8-tetrahydrofolate binding; sequence SLLP.

It belongs to the Fmt family.

The catalysed reaction is L-methionyl-tRNA(fMet) + (6R)-10-formyltetrahydrofolate = N-formyl-L-methionyl-tRNA(fMet) + (6S)-5,6,7,8-tetrahydrofolate + H(+). Functionally, attaches a formyl group to the free amino group of methionyl-tRNA(fMet). The formyl group appears to play a dual role in the initiator identity of N-formylmethionyl-tRNA by promoting its recognition by IF2 and preventing the misappropriation of this tRNA by the elongation apparatus. This Malacoplasma penetrans (strain HF-2) (Mycoplasma penetrans) protein is Methionyl-tRNA formyltransferase.